A 589-amino-acid chain; its full sequence is ATP-dependent ubiquitin transferase-like protein Cap2 (589 aa).

Cys-13 participates in a covalent cross-link: Glycyl cysteine dithioester (Cys-Gly) (interchain with G-Cter in DncV). Residue Lys-77 forms a Glycyl lysine isopeptide (Lys-Gly) (interchain with G-Cter in DncV) linkage. Cys-91 acts as the For E2-like domain in catalysis. Glycyl lysine isopeptide (Lys-Gly) (interchain with G-Cter in DncV) cross-links involve residues Lys-305, Lys-387, and Lys-484. Residue Cys-493 forms a Glycyl cysteine dithioester (Cys-Gly) (interchain with G-Cter in DncV) linkage. Active-site for E1-like domain residues include Cys-493, Cys-496, and Cys-513. A Glycyl cysteine dithioester (Cys-Gly) (interchain with G-Cter in DncV) cross-link involves residue Cys-513. A Glycyl lysine isopeptide (Lys-Gly) (interchain with G-Cter in DncV) cross-link involves residue Lys-523.

This sequence in the C-terminal section; belongs to the HesA/MoeB/ThiF family. As to quaternary structure, a Cap2 dimer is bound on either side by a DncV monomer. Conjugated to DncV via 5 different Lys residues and 3 Cys residues.

In terms of biological role, CD-NTase priming component of a CBASS antiviral system. CBASS (cyclic oligonucleotide-based antiphage signaling system) provides immunity against bacteriophages. The CD-NTase protein (DncV) synthesizes cyclic nucleotides in response to infection; these serve as specific second messenger signals. The signals activate a diverse range of effectors, leading to bacterial cell death and thus abortive phage infection. A type II-A(GA) CBASS system. Conjugates DncV to itself in vitro and to other cellular proteins in vivo; conjugation requires ATP. This primes DncV, upon phage infection CdnA activates and makes cyclic nucleotides. Its function is as follows. Protects E.coli against phage infection. When capV and dncV are introduced in E.coli MG1655 there is 1000-fold protection against phage P1; protection against other phage (T2, T4, T5, T6 and lambda-vir) requires the 2 subsequent genes. In another paper the capV-dncV-cap2-cap3 operon gives 10(4)-10(5)-fold protection against phages lambda, T2, T4 and T6, about 1000-fold protection against P1 and 10-fold protection against T5. This chain is ATP-dependent ubiquitin transferase-like protein Cap2, found in Escherichia coli (strain TW11681).